The chain runs to 402 residues: Tryptophan synthase beta chain (402 aa).

At K91 the chain carries N6-(pyridoxal phosphate)lysine.

The protein belongs to the TrpB family. As to quaternary structure, tetramer of two alpha and two beta chains. Pyridoxal 5'-phosphate is required as a cofactor.

The enzyme catalyses (1S,2R)-1-C-(indol-3-yl)glycerol 3-phosphate + L-serine = D-glyceraldehyde 3-phosphate + L-tryptophan + H2O. The protein operates within amino-acid biosynthesis; L-tryptophan biosynthesis; L-tryptophan from chorismate: step 5/5. Its function is as follows. The beta subunit is responsible for the synthesis of L-tryptophan from indole and L-serine. The protein is Tryptophan synthase beta chain of Streptococcus thermophilus (strain CNRZ 1066).